The primary structure comprises 116 residues: Nitrogenase iron-iron protein delta chain (116 aa).

As to quaternary structure, hexamer of two alpha, two beta, and two delta chains. The cofactor is iron-sulfur cluster.

It carries out the reaction N2 + 8 reduced [2Fe-2S]-[ferredoxin] + 16 ATP + 16 H2O = H2 + 8 oxidized [2Fe-2S]-[ferredoxin] + 2 NH4(+) + 16 ADP + 16 phosphate + 6 H(+). Its function is as follows. The key enzymatic reactions in nitrogen fixation are catalyzed by the nitrogenase complex, which has 2 components: the iron protein (component 2) and a component 1 which is either a molybdenum-iron protein, a vanadium-iron, or an iron-iron protein. This is Nitrogenase iron-iron protein delta chain (anfG) from Clostridium pasteurianum.